A 132-amino-acid polypeptide reads, in one-letter code: 3-aminoacrylate deaminase RutC (132 aa).

This sequence belongs to the RutC family.

The enzyme catalyses (Z)-3-aminoacrylate + H2O + H(+) = 3-oxopropanoate + NH4(+). In terms of biological role, involved in pyrimidine catabolism. Catalyzes the deamination of 3-aminoacrylate to malonic semialdehyde, a reaction that can also occur spontaneously. RutC may facilitate the reaction and modulate the metabolic fitness, rather than catalyzing essential functions. The polypeptide is 3-aminoacrylate deaminase RutC (Cronobacter turicensis (strain DSM 18703 / CCUG 55852 / LMG 23827 / z3032)).